Reading from the N-terminus, the 663-residue chain is Polyunsaturated fatty acid lipoxygenase ALOX15 (663 aa).

One can recognise a PLAT domain in the interval 2–115; that stretch reads GVYRIRVSTG…ILNLPEGTGC (114 aa). In terms of domain architecture, Lipoxygenase spans 116 to 663; sequence TVVEDSQGLF…PSLVENSVAI (548 aa). Positions 361, 366, 541, 545, and 663 each coordinate Fe cation.

The protein belongs to the lipoxygenase family. Interacts with PEBP1; in response to IL13/interleukin-13, prevents the interaction of PEBP1 with RAF1 to activate the ERK signaling cascade. Fe cation serves as cofactor. Found in pituitary and pineal glands as well as leukocytes, kidney, aorta, small intestine and cornea. Also expressed by resident peritoneal macrophages (at protein level).

The protein localises to the cytoplasm. The protein resides in the cytosol. It is found in the cell membrane. It localises to the lipid droplet. The enzyme catalyses (5Z,8Z,11Z,14Z)-eicosatetraenoate + O2 = (12S)-hydroperoxy-(5Z,8Z,10E,14Z)-eicosatetraenoate. It catalyses the reaction (5Z,8Z,11Z,14Z)-eicosatetraenoate + O2 = (15S)-hydroperoxy-(5Z,8Z,11Z,13E)-eicosatetraenoate. It carries out the reaction (9Z,12Z)-octadecadienoate + O2 = (13S)-hydroperoxy-(9Z,11E)-octadecadienoate. The catalysed reaction is (5Z,8Z,11Z,14Z)-eicosatetraenoate + 2 O2 = (14R,15S)-dihydroperoxy-(5Z,8Z,10E,12E)-eicosatetraenoate. The enzyme catalyses (5Z,8Z,11Z,14Z)-eicosatetraenoate + 2 O2 = (8S,15S)-dihydroperoxy-(5Z,9E,11Z,13E)-eicosatetraenoate. It catalyses the reaction (14S,15R)-epoxy-(5Z,8Z,11Z)-eicosatrienoate + O2 = (8S)-hydroperoxy-(14S,15R)-epoxy-(5Z,9E,11Z)-eicosatrienoate. It carries out the reaction (14S,15R)-epoxy-(5Z,8Z,11Z)-eicosatrienoate + O2 = (12S)-hydroperoxy-(14S,15R)-epoxy-(5Z,8Z,10E)-eicosatrienoate. The catalysed reaction is (14R,15S)-epoxy-(5Z,8Z,11Z)-eicosatrienoate + O2 = (5S)-hydroperoxy-(14R,15S)-epoxy-(6E,8Z,11Z)-eicosatrienoate. The enzyme catalyses (14R,15S)-epoxy-(5Z,8Z,11Z)-eicosatrienoate + O2 = (12S)-hydroperoxy-(14R,15S)-epoxy-(5Z,8Z,10E)-eicosatrienoate. It catalyses the reaction (15R)-hydroperoxy-(5Z,8Z,11Z,13E)-eicosatetraenoate = 15-oxo-(5Z,8Z,11Z,13E)-eicosatetraenoate + H2O. It carries out the reaction (15S)-hydroperoxy-(5Z,8Z,11Z,13E)-eicosatetraenoate = (14S,15S)-epoxy-(5Z,8Z,10E,12E)-eicosatetraenoate + H2O. The catalysed reaction is (12S)-hydroperoxy-(5Z,8Z,10E,14Z)-eicosatetraenoate = (8S)-hydroxy-(11S,12S)-epoxy-(5Z,9E,14Z)-eicosatrienoate. The enzyme catalyses (4Z,7Z,10Z,13Z,16Z)-docosapentaenoate + O2 = 14-hydroperoxy-(4Z,7Z,10Z,12E,16Z)-docosapentaenoate. It catalyses the reaction (7Z,10Z,13Z,16Z,19Z)-docosapentaenoate + O2 = 14-hydroperoxy-(7Z,10Z,12E,16Z,19Z)-docosapentaenoate. It carries out the reaction (4Z,7Z,10Z,13Z,16Z,19Z)-docosahexaenoate + O2 = (14S)-hydroperoxy-(4Z,7Z,10Z,12E,16Z,19Z)-docosahexaenoate. The catalysed reaction is (4Z,7Z,10Z,13Z,16Z,19Z)-docosahexaenoate + O2 = (17S)-hydroperoxy-(4Z,7Z,10Z,13Z,15E,19Z)-docosahexaenoate. The enzyme catalyses (7S)-hydroperoxy-(4Z,8E,10Z,13Z,16Z,19Z)-docosahexaenoate + O2 = (7S,14S)-dihydroperoxy-(4Z,8E,10Z,12E,16Z,19Z)-docosahexaenoate. It catalyses the reaction (7S)-hydroperoxy-(4Z,8E,10Z,13Z,16Z,19Z)-docosahexaenoate + O2 = (7S,17S)-dihydroperoxy-(4Z,8E,10Z,13Z,15E,19Z)-docosahexaenoate. It carries out the reaction (4Z,7Z,10Z,13Z,16Z,19Z)-docosahexaenoate + O2 = (11S)-hydroperoxy-(4Z,7Z,9E,13Z,16Z,19Z)-docosahexaenoate. The catalysed reaction is N-(5Z,8Z,11Z,14Z)-eicosatetraenoyl-taurine + O2 = N-(12S)-hydroperoxy-(5Z,8Z,10E,14Z)-eicosatetraenoyl-taurine. The enzyme catalyses N-(5Z,8Z,11Z,14Z)-eicosatetraenoyl-gamma-aminobutanoate + O2 = N-(12S)-hydroperoxy-(5Z,8Z,10E,14Z)-eicosatetraenoyl-gamma-aminobutanoate. It catalyses the reaction N-(5Z,8Z,11Z,14Z)-eicosatetraenoyl-glycine + O2 = N-(12S)-hydroperoxy-(5Z,8Z,10E,14Z)-eicosatetraenoyl-glycine. It carries out the reaction N-(5Z,8Z,11Z,14Z)-eicosatetraenoyl-L-alanine + O2 = N-(12S)-hydroperoxy-(5Z,8Z,10E,14Z)-eicosatetraenoyl-alanine. The catalysed reaction is N-(5Z,8Z,11Z,14Z)-eicosatetraenoyl-taurine + O2 = N-(15S)-hydroperoxy-(5Z,8Z,11Z,13E)-eicosatetraenoyl-taurine. The enzyme catalyses N-(5Z,8Z,11Z,14Z)-eicosatetraenoyl-gamma-aminobutanoate + O2 = N-(15S)-hydroperoxy-(5Z,8Z,11Z,13E)-eicosatetraenoyl-gamma-aminobutanoate. It catalyses the reaction N-(5Z,8Z,11Z,14Z)-eicosatetraenoyl-glycine + O2 = N-(15S)-hydroperoxy-(5Z,8Z,11Z,13E)-eicosatetraenoyl-glycine. It carries out the reaction N-(5Z,8Z,11Z,14Z)-eicosatetraenoyl-L-alanine + O2 = N-(15S)-hydroperoxy-(5Z,8Z,11Z,13E)-eicosatetraenoyl-alanine. It functions in the pathway lipid metabolism; hydroperoxy eicosatetraenoic acid biosynthesis. In terms of biological role, non-heme iron-containing dioxygenase that catalyzes the stereo-specific peroxidation of free and esterified polyunsaturated fatty acids generating a spectrum of bioactive lipid mediators. It inserts peroxyl groups at C12 or C15 of arachidonate ((5Z,8Z,11Z,14Z)-eicosatetraenoate) producing both 12-hydroperoxyeicosatetraenoate/12-HPETE and 15-hydroperoxyeicosatetraenoate/15-HPETE. It may then act on 12-HPETE to produce hepoxilins, which may show pro-inflammatory properties. Can also peroxidize linoleate ((9Z,12Z)-octadecadienoate) to 13-hydroperoxyoctadecadienoate. May participate in the sequential oxidations of DHA ((4Z,7Z,10Z,13Z,16Z,19Z)-docosahexaenoate) to generate specialized pro-resolving mediators (SPMs)like resolvin D5 ((7S,17S)-diHPDHA) and (7S,14S)-diHPDHA, that actively down-regulate the immune response and have anti-aggregation properties with platelets. Can convert epoxy fatty acids to hydroperoxy-epoxides derivatives followed by an intramolecular nucleophilic substitution leading to the formation of monocyclic endoperoxides. Plays an important role during the maintenance of self-tolerance by peroxidizing membrane-bound phosphatidylethanolamine which can then signal the sorting process for clearance of apoptotic cells during inflammation and prevent an autoimmune response. In addition to its role in the immune and inflammatory responses, this enzyme may play a role in epithelial wound healing in the cornea through production of lipoxin A4 (LXA(4)) and docosahexaenoic acid-derived neuroprotectin D1 (NPD1; 10R,17S-HDHA), both lipid autacoids exhibit anti-inflammatory and neuroprotective properties. Furthermore, it may regulate actin polymerization which is crucial for several biological processes such as the phagocytosis of apoptotic cells. It is also implicated in the generation of endogenous ligands for peroxisome proliferator activated receptor (PPAR-gamma), hence modulating macrophage development and function. It may also exert a negative effect on skeletal development by regulating bone mass through this pathway. As well as participates in ER stress and downstream inflammation in adipocytes, pancreatic islets, and liver. Finally, it is also involved in the cellular response to IL13/interleukin-13. The protein is Polyunsaturated fatty acid lipoxygenase ALOX15 of Mus musculus (Mouse).